Here is a 438-residue protein sequence, read N- to C-terminus: MDLGTTKYIIYTELIADGYVEKHDVIGAIFGQTEGLLSNELDLRDLQKSGRIGRIDVDLENINGKSFAKITLPSSLDKVETSILAATLETIDRVGPCFATVKITEVEDIRVSKRQYITNRARSILRKLMDEMIDTYEITEEIKESLRTEEIMEFGPENLPCGPNVVHSDSIIVVEGRADVLNLLRCGIKNTVAVEGTSVPKSIMDLTKKKTTTAFTDGDRGGELILKELLQTCDIDYVARAPYGKEVEGTSKKEIMKCLRAKVPVEQIVGNTCNDTCNVSKVIENRPEEIVEPITHKYYEKVETPVTEPVFEDEIVEEETVIVEPVKKTETEIIDVDATNEIQADKKFSGVKEIVDSIKNTGNVKFVVDGTEKTNTFKEFLTNIHEIKKMDFFAADMPISQKIVDLLYDKTPIIVGKEIHVTKKPVNLRLFSFDEIVA.

The 75-residue stretch at 169 to 243 folds into the Toprim domain; that stretch reads DSIIVVEGRA…DIDYVARAPY (75 aa). Positions 175, 217, and 219 each coordinate Mg(2+).

This sequence belongs to the archaeal DnaG primase family. Forms a ternary complex with MCM helicase and DNA. The cofactor is Mg(2+).

The catalysed reaction is ssDNA + n NTP = ssDNA/pppN(pN)n-1 hybrid + (n-1) diphosphate.. Functionally, RNA polymerase that catalyzes the synthesis of short RNA molecules used as primers for DNA polymerase during DNA replication. This chain is DNA primase DnaG, found in Methanococcus maripaludis (strain C6 / ATCC BAA-1332).